A 556-amino-acid chain; its full sequence is Urocanate hydratase (556 aa).

NAD(+)-binding positions include 52 to 53 (GG), Q130, 176 to 178 (GMG), E196, R201, 242 to 243 (NA), 263 to 267 (QTSAH), 273 to 274 (YL), and Y322. The active site involves C410. G492 lines the NAD(+) pocket.

It belongs to the urocanase family. NAD(+) serves as cofactor.

It is found in the cytoplasm. The enzyme catalyses 4-imidazolone-5-propanoate = trans-urocanate + H2O. It participates in amino-acid degradation; L-histidine degradation into L-glutamate; N-formimidoyl-L-glutamate from L-histidine: step 2/3. Functionally, catalyzes the conversion of urocanate to 4-imidazolone-5-propionate. This Shewanella sediminis (strain HAW-EB3) protein is Urocanate hydratase.